We begin with the raw amino-acid sequence, 453 residues long: Validoxylamine A glucosyltransferase (453 aa).

The protein belongs to the glycosyltransferase 2 family. Requires Mn(2+) as cofactor.

The catalysed reaction is validoxylamine A + UDP-alpha-D-glucose = validamycin A + UDP + H(+). Its function is as follows. Involved in the biosynthesis of the antifungal agent validamycin A. Catalyzes the final attachment of glucose from UDP-alpha-D-glucose to validoxylamine A to yield validamycin A. This Streptomyces hygroscopicus subsp. limoneus protein is Validoxylamine A glucosyltransferase.